A 484-amino-acid polypeptide reads, in one-letter code: MAKFTPANLPAEFLDTMRDIMPSSLSMDDFIAACQRPLRRSIRVNTLKISVEAFLRLVQPYGWQLEPIPWCQEGFWLLNAEEENTRLGNTLEHLSGLFYIQEASSMLPVSALFHRNEALETVLDVAAAPGSKTTQIAARLDNKGAIVANEYSASRVKVLHANISRCGVSNTAMTHFDGRVFGAALPEYFDAILLDAPCSGEGVVRKDPAAMSHWSPESITEIAATQRDLILSAFHALKPGGVMIYSTCTLNKQENQQVCHWLQAQFPDACEFESLRDLFTDAERATTEDGFLHVFPQIYDSEGFFVARLRKTASVPPLPRPGYKVGKFPFSPVAPKDCVPLIQAARKQGIHWDETLLQLWQRDSEIWLFPAALASAFGNIKFSRIGIKLAERFPKGFRWQHEAVVALADPNANNAYALTDDIACEWFQGKDCYPEPLPTADELILTYQNTPVGLAKRINSRIKNSLPRDLVRDGASSAQQLAKE.

Residues 126-132 (AAAPGSK), Glu150, Asp177, and Asp195 contribute to the S-adenosyl-L-methionine site. The active-site Nucleophile is Cys248.

It belongs to the class I-like SAM-binding methyltransferase superfamily. RsmB/NOP family.

The protein resides in the cytoplasm. It carries out the reaction cytidine(1407) in 16S rRNA + S-adenosyl-L-methionine = 5-methylcytidine(1407) in 16S rRNA + S-adenosyl-L-homocysteine + H(+). Its function is as follows. Specifically methylates the cytosine at position 1407 (m5C1407) of 16S rRNA. The sequence is that of Ribosomal RNA small subunit methyltransferase F from Pectobacterium carotovorum subsp. carotovorum (strain PC1).